The primary structure comprises 735 residues: Glutamine-dependent NAD(+) synthetase (735 aa).

Residues 4-274 form the CN hydrolase domain; it reads LRVATCNLNQ…VEVLDALVDL (271 aa). The active-site Proton acceptor; for glutaminase activity is Glu44. Residue Lys113 is the For glutaminase activity of the active site. Catalysis depends on Cys174, which acts as the Nucleophile; for glutaminase activity. Residues 324–711 are ligase; sequence YHRPEEEIAF…STEGELRRRK (388 aa). 354–361 is a binding site for ATP; it reads PLSGGADS. Ser356 is a catalytic residue.

It in the C-terminal section; belongs to the NAD synthetase family.

It carries out the reaction deamido-NAD(+) + L-glutamine + ATP + H2O = L-glutamate + AMP + diphosphate + NAD(+) + H(+). Its pathway is cofactor biosynthesis; NAD(+) biosynthesis; NAD(+) from deamido-NAD(+) (L-Gln route): step 1/1. The sequence is that of Glutamine-dependent NAD(+) synthetase from Oryza sativa subsp. indica (Rice).